The following is a 1666-amino-acid chain: Complement C3 (1666 aa).

Positions 1–22 (MGPAAGPSLLLLLLASVSLALG) are cleaved as a signal peptide. 3 positions are modified to phosphoserine: Ser-70, Ser-296, and Ser-302. Disulfide bonds link Cys-557–Cys-821, Cys-630–Cys-666, Cys-698–Cys-725, Cys-699–Cys-732, Cys-712–Cys-733, Cys-878–Cys-1517, Cys-1106–Cys-1163, Cys-1363–Cys-1493, Cys-1394–Cys-1462, Cys-1510–Cys-1515, Cys-1522–Cys-1593, Cys-1540–Cys-1664, and Cys-1640–Cys-1649. Ser-676 carries the phosphoserine modification. The Anaphylatoxin-like domain occupies 698-733 (CCEDGMRENPMQFSCQRRARYVSLGEACVKAFLDCC). An N-linked (GlcNAc...) asparagine glycan is attached at Asn-944. At Ser-973 the chain carries Phosphoserine. The segment at residues 1015 to 1018 (CGEQ) is a cross-link (isoglutamyl cysteine thioester (Cys-Gln)). Ser-1326 is modified (phosphoserine). One can recognise an NTR domain in the interval 1522–1664 (CFIQLPEKIT…FTENMVVFGC (143 aa)). Ser-1576 is modified (phosphoserine). N-linked (GlcNAc...) asparagine glycosylation is present at Asn-1620. Residues 1637 to 1662 (AEECQDEENQQQCQDLGTFTENMVVF) are interaction with CFP/properdin.

In terms of assembly, in absence of complement activation, the C3 precursor is first processed by the removal of 4 Arg residues, forming two chains, beta and alpha, linked by a disulfide bond. As to quaternary structure, complement C3b is composed of complement C3b and complement C3 beta chains that are associated via disulfide bonds. Non-enzymatic component of the C5 convertase, also named C4bC2bC3b, composed of the serine protease complement C2b (C2), complement C3b, as well as complement C4b (C4). Non-enzymatic component of the C5 convertase of the alternative complement pathways composed of the serine protease complement CFB and complement C3b. Interacts with CFP; interaction takes place together with CFB in the alternative complement system and allows the complex to become active. Interacts with CR1 (via Sushi 8 and Sushi 9 domains). Interacts with CFH. Interacts with CFH. Interacts with CR2. In terms of assembly, during pregnancy, C3dg exists as a complex (probably a 2:2:2 heterohexamer) with AGT and the proform of PRG2. Interacts with CR2 (via the N-terminal Sushi domains 1 and 2). Post-translationally, C3 precursor is first processed by the removal of 4 Arg residues, forming two chains, beta and alpha, linked by a disulfide bond. During activation of the complement systems, the alpha chain is cleaved into C3a and C3b by the C3 convertase: C3b stays linked to the beta chain, while C3a is released in the plasma. The alpha chain is cleaved by the serine protease complement C2b component of the C3 convertase to generate C3a and C3b following activation by the classical, lectin and GZMK complement systems. The alpha chain is cleaved by CFB component of the C3 convertase to generate C3a and C3b following activation by the alternative complement system. C3a is further processed by carboxypeptidases to release the C-terminal arginine residue generating the acylation stimulating protein (ASP). Levels of ASP are increased in adipocytes in the postprandial period and by insulin and dietary chylomicrons. In terms of processing, complement C3b is rapidly split in two positions by factor I (CFI) and a cofactor (CFH) to form iC3b (inactivated C3b) and C3f which is released. CFI and CFH catalyze proteolytic degradation of already-deposited complement C3b. Then iC3b is slowly cleaved (possibly by CFI) to form C3c (beta chain + alpha' chain fragment 1 + alpha' chain fragment 2), C3dg and C3f. Other proteases produce other fragments such as C3d or C3g. Post-translationally, upon activation, the internal thioester bond reacts with carbohydrate antigens on the target surface to form amide or ester bonds, leading to covalent association with the surface of pathogens. Complement C3b interacts with complement C4b via a thioester linkage. In terms of processing, phosphorylated by FAM20C in the extracellular medium.

It is found in the secreted. It localises to the cell surface. Complement activation is inhibited by VSIG4. In terms of biological role, precursor of non-enzymatic components of the classical, alternative, lectin and GZMK complement pathways, which consist in a cascade of proteins that leads to phagocytosis and breakdown of pathogens and signaling that strengthens the adaptive immune system. Non-enzymatic component of C5 convertase. Generated following cleavage by C3 convertase, it covalently attaches to the surface of pathogens, where it acts as an opsonin that marks the surface of antigens for removal. Complement C3b binds covalently via its reactive thioester, to cell surface carbohydrates or immune aggregates. Together with complement C4b, it then recruits the serine protease complement C2b to form the C5 convertase, which cleaves and activate C5, the next component of the complement pathways. In the alternative complement pathway, recruits the serine protease CFB to form the C5 convertase that cleaves and activates C5. Functionally, mediator of local inflammatory process released following cleavage by C3 convertase. Acts by binding to its receptor, C3AR1, activating G protein-coupled receptor signaling, promoting the phosphorylation, ARRB2-mediated internalization and endocytosis of C3AR1. C3a anaphylatoxin stimulates the activation of immune cells such as mast cells and basophilic leukocytes to release inflammation agents, such as cytokines, chemokines and histamine, which promote inflammation development. Also acts as potent chemoattractant for the migration of macrophages and neutrophils to the inflamed tissues, resulting in neutralization of the inflammatory triggers by multiple ways, such as phagocytosis and generation of reactive oxidants. Its function is as follows. Adipogenic hormone that stimulates triglyceride synthesis and glucose transport in adipocytes, regulating fat storage and playing a role in postprandial triglyceride clearance. Appears to stimulate triglyceride synthesis via activation of the PLC, MAPK and AKT signaling pathways. Acts by binding to its receptor, C5AR2, activating G protein-coupled receptor signaling, promoting the phosphorylation, ARRB2-mediated internalization and endocytosis of C5AR2. In terms of biological role, acts as a chemoattractant for neutrophils in chronic inflammation. This Cavia porcellus (Guinea pig) protein is Complement C3.